Reading from the N-terminus, the 139-residue chain is uncharacterized protein (139 aa).

Residues Met1–Lys116 are disordered. Composition is skewed to low complexity over residues Arg50–Pro70 and Leu84–Arg110.

This is an uncharacterized protein from Homo sapiens (Human).